The primary structure comprises 410 residues: MLRDTLKKAEKARDKKALYGEDIDLERFIKEEAGEHEEVPRAREVPKKVQETLLKVGVDPEERERAGTFIQVDQSGICTTCASESIEIMGMNVALDRYSWLKDYMWKAVAVDTDKYTATTALREAEGEMGGYFIRSMPGSREVFPLQACMFIGDENVMQTAHNIIIAEENSELHIITGCATGQDVSSALHVGVSEFYLKKGAKITFTMVHNWAEQVEVRPRTGIMVGDDATYISNYILTSPVKSIQSYPTAYCTGENSRVVFQSILGGQKDSVLDMGSRVILEGRGSSAEMVSRAVSKDASQIYSRGHLAGRVPEVKGHLECHGLVLSDDSMIYAVPELEGSATELEMSHEAAVGKIAEEEVMYLTSRGLTEDEAASMIVRGFLSMDITGLPPELAAETKRMLDMSLKGM.

This sequence belongs to the iron-sulfur cluster assembly SufBD family.

This is Iron-sulfur cluster assembly SufBD family protein MTH1150 homolog from Methanothermobacter thermautotrophicus (strain Winter) (Methanobacterium thermoautotrophicum).